Reading from the N-terminus, the 620-residue chain is Probable translation initiation factor IF-2 (620 aa).

Positions 1–10 (MSDTDADADT) are enriched in acidic residues. The interval 1 to 29 (MSDTDADADTDAVSTTETSMNADANANAD) is disordered. Positions 11–29 (DAVSTTETSMNADANANAD) are enriched in low complexity. Positions 33–248 (LRTPIVAVLG…VLMGLSQRYM (216 aa)) constitute a tr-type G domain. A G1 region spans residues 42-49 (GHVDHGKT). 42–49 (GHVDHGKT) is a GTP binding site. A G2 region spans residues 67 to 71 (AITQH). Residues 104–107 (DTPG) are G3. Residues 104 to 108 (DTPGH) and 158 to 161 (NKVD) each bind GTP. Residues 158–161 (NKVD) form a G4 region. The segment covering 162–183 (TTPGWTPTDGSPIQPTYESQPS) has biased composition (polar residues). Residues 162–185 (TTPGWTPTDGSPIQPTYESQPSAA) form a disordered region. The G5 stretch occupies residues 226 to 228 (SAI).

This sequence belongs to the TRAFAC class translation factor GTPase superfamily. Classic translation factor GTPase family. IF-2 subfamily.

In terms of biological role, function in general translation initiation by promoting the binding of the formylmethionine-tRNA to ribosomes. Seems to function along with eIF-2. This is Probable translation initiation factor IF-2 from Haloquadratum walsbyi (strain DSM 16790 / HBSQ001).